Here is a 362-residue protein sequence, read N- to C-terminus: Molybdenum import ATP-binding protein ModC (362 aa).

Positions 2–236 (ASPIEVRLQM…LDLPLAMGSD (235 aa)) constitute an ABC transporter domain. 34 to 41 (GPSGSGKT) contacts ATP. In terms of domain architecture, Mop spans 297–362 (QSSILNRLPV…AQIKAVAVLA (66 aa)).

This sequence belongs to the ABC transporter superfamily. Molybdate importer (TC 3.A.1.8) family. As to quaternary structure, the complex is composed of two ATP-binding proteins (ModC), two transmembrane proteins (ModB) and a solute-binding protein (ModA).

The protein resides in the cell inner membrane. The enzyme catalyses molybdate(out) + ATP + H2O = molybdate(in) + ADP + phosphate + H(+). Its function is as follows. Part of the ABC transporter complex ModABC involved in molybdenum import. Responsible for energy coupling to the transport system. The chain is Molybdenum import ATP-binding protein ModC from Pseudomonas syringae pv. syringae (strain B728a).